Consider the following 211-residue polypeptide: MAIQEIRHPLIRHKLGLLRRADISTKNFRELAQEVTMLLTYEATKDLPVVDCEIEGWAGNVTTQRIAGKKITIVPILRAGIGMLDGVLNLIPSAKVSVLGLERDEATLEVRTYYKKLVPDVANRIAMIIDPMLATGNSLVAAIDVLKASGCKDIRVMVLVAAPEGIAKVEAAHPDIQLYTASIDNGLNEHGYIVPGLGDAGDKIFGSVQKD.

5-phospho-alpha-D-ribose 1-diphosphate-binding positions include arginine 78, arginine 103, and 130–138; that span reads DPMLATGNS. Uracil contacts are provided by residues isoleucine 193 and 198–200; that span reads GDA. Aspartate 199 is a binding site for 5-phospho-alpha-D-ribose 1-diphosphate.

It belongs to the UPRTase family. Mg(2+) serves as cofactor.

It carries out the reaction UMP + diphosphate = 5-phospho-alpha-D-ribose 1-diphosphate + uracil. It participates in pyrimidine metabolism; UMP biosynthesis via salvage pathway; UMP from uracil: step 1/1. With respect to regulation, allosterically activated by GTP. Functionally, catalyzes the conversion of uracil and 5-phospho-alpha-D-ribose 1-diphosphate (PRPP) to UMP and diphosphate. This is Uracil phosphoribosyltransferase from Acinetobacter baumannii (strain AB307-0294).